The chain runs to 93 residues: Small ribosomal subunit protein mS33 (93 aa).

Belongs to the mitochondrion-specific ribosomal protein mS33 family. Component of the mitochondrial small ribosomal subunit (mt-SSU). Mature yeast 74S mitochondrial ribosomes consist of a small (37S) and a large (54S) subunit. The 37S small subunit contains a 15S ribosomal RNA (15S mt-rRNA) and at least 32 different proteins. The 54S large subunit contains a 21S rRNA (21S mt-rRNA) and at least 45 different proteins.

It is found in the mitochondrion. Component of the mitochondrial ribosome (mitoribosome), a dedicated translation machinery responsible for the synthesis of mitochondrial genome-encoded proteins, including at least some of the essential transmembrane subunits of the mitochondrial respiratory chain. The mitoribosomes are attached to the mitochondrial inner membrane and translation products are cotranslationally integrated into the membrane. This chain is Small ribosomal subunit protein mS33 (rsm27), found in Schizosaccharomyces pombe (strain 972 / ATCC 24843) (Fission yeast).